Reading from the N-terminus, the 153-residue chain is SsrA-binding protein (153 aa).

Belongs to the SmpB family.

The protein resides in the cytoplasm. Required for rescue of stalled ribosomes mediated by trans-translation. Binds to transfer-messenger RNA (tmRNA), required for stable association of tmRNA with ribosomes. tmRNA and SmpB together mimic tRNA shape, replacing the anticodon stem-loop with SmpB. tmRNA is encoded by the ssrA gene; the 2 termini fold to resemble tRNA(Ala) and it encodes a 'tag peptide', a short internal open reading frame. During trans-translation Ala-aminoacylated tmRNA acts like a tRNA, entering the A-site of stalled ribosomes, displacing the stalled mRNA. The ribosome then switches to translate the ORF on the tmRNA; the nascent peptide is terminated with the 'tag peptide' encoded by the tmRNA and targeted for degradation. The ribosome is freed to recommence translation, which seems to be the essential function of trans-translation. In Orientia tsutsugamushi (strain Boryong) (Rickettsia tsutsugamushi), this protein is SsrA-binding protein.